The primary structure comprises 398 residues: MTLPFADSAQSTLGIEWELALVDAVSGELRSEAPDLLRALHVAEGLADDDVNPHMTSELLQNTVELVTGVHERVDAATADLGRIAARVADAAAARGISLFCQGTHPFADAIAQPSTPSERYDRMLDLTQYWGRQLLIFGVHVHVGLDDVSKAMPVVNGLVNRVPHLLALSASSPFWAGTDTGYQSQRTLLFQQLPTAGLPFQFQEWEDFERCVAQMEQVGMIADVTECRWDVRAVPRLGTVEMRACDGLATLEEIAAVTAYTQCLVDDLSASLERGETVEVLPPWHAQENKWRAARYGMDATVIVDARGTQVPLAEHLPAEIERLTPVAERLGCEAELAGVQAMIDDGGAARQRRVEAQALAGPPAEGEDADDAVAPLRAVVLDAAARTRASLDGRTG.

Belongs to the glutamate--cysteine ligase type 2 family. YbdK subfamily.

It carries out the reaction L-cysteine + L-glutamate + ATP = gamma-L-glutamyl-L-cysteine + ADP + phosphate + H(+). In terms of biological role, ATP-dependent carboxylate-amine ligase which exhibits weak glutamate--cysteine ligase activity. The chain is Putative glutamate--cysteine ligase 2 from Micrococcus luteus (strain ATCC 4698 / DSM 20030 / JCM 1464 / CCM 169 / CCUG 5858 / IAM 1056 / NBRC 3333 / NCIMB 9278 / NCTC 2665 / VKM Ac-2230) (Micrococcus lysodeikticus).